A 316-amino-acid polypeptide reads, in one-letter code: Taste receptor type 2 member 3 (316 aa).

The Extracellular segment spans residues 1-6 (MMGLTE). A helical transmembrane segment spans residues 7–27 (GVFLILSGTQFTLGILVNCFI). Over 28–42 (ELVNGSSWFKTKRMS) the chain is Cytoplasmic. The helical transmembrane segment at 43–63 (LSDFIITTLALLRIILLCIIL) threads the bilayer. At 64 to 94 (TDSFLIEFSPNTHDSGIIMQIIDVSWTFTNH) the chain is on the extracellular side. The chain crosses the membrane as a helical span at residues 95–115 (LSIWLATCLGVLYCLKIASFS). The Cytoplasmic portion of the chain corresponds to 116-128 (HPTFLWLKWRVSR). The helical transmembrane segment at 129-149 (VMVWMLLGALLLSCGSTASLI) threads the bilayer. Over 150-186 (NEFKLYSVFRGIEATRNVTEHFRKKRSEYYLIHVLGT) the chain is Extracellular. N-linked (GlcNAc...) asparagine glycosylation occurs at asparagine 166. Residues 187–207 (LWYLPPLIVSLASYSLLIFSL) form a helical membrane-spanning segment. Residues 208-234 (GRHTRQMLQNGTSSRDPTTEAHKRAIR) are Cytoplasmic-facing. A helical membrane pass occupies residues 235–255 (IILSFFFLFLLYFLAFLIASF). Topologically, residues 256–266 (GNFLPKTKMAK) are extracellular. The chain crosses the membrane as a helical span at residues 267-287 (MIGEVMTMFYPAGHSFILILG). The Cytoplasmic segment spans residues 288–316 (NSKLKQTFVVMLRCESGHLKPGSKGPIFS).

This sequence belongs to the G-protein coupled receptor T2R family. Expressed in subsets of taste receptor cells of the tongue and palate epithelium and exclusively in gustducin-positive cells. Expressed in the antrum and fundus (part of the stomach), duodenum and in gastric endocrine cells.

It localises to the membrane. Functionally, gustducin-coupled receptor implicated in the perception of bitter compounds in the oral cavity and the gastrointestinal tract. Signals through PLCB2 and the calcium-regulated cation channel TRPM5. The polypeptide is Taste receptor type 2 member 3 (TAS2R3) (Homo sapiens (Human)).